Reading from the N-terminus, the 191-residue chain is uncharacterized protein (191 aa).

The next 4 membrane-spanning stretches (helical) occupy residues 12–32 (FAFL…FFTL), 48–68 (LVAL…LTLF), 92–112 (YISV…LLSL), and 168–188 (IFCL…SCAF).

It is found in the membrane. This is an uncharacterized protein from Saccharomyces cerevisiae (strain ATCC 204508 / S288c) (Baker's yeast).